The following is a 325-amino-acid chain: SAM pointed domain-containing Ets transcription factor (325 aa).

2 disordered regions span residues 27 to 50 and 79 to 100; these read GTEKAASGAMGPEKQEWSPSPPAT and ARAGEDHPEEPEQCPVIDSQAS. In terms of domain architecture, PNT spans 119–203; that stretch reads EVLKDIETAC…AHLDIWKSAA (85 aa). The ETS DNA-binding region spans 239 to 322; sequence IHLWQFLKEL…ISQRLVYQFV (84 aa).

It belongs to the ETS family. As to quaternary structure, interacts with the DNA-binding domain of the androgen receptor. Interacts with NKX3-1. In terms of tissue distribution, expressed in the accessory glands of sex organs including the prostate, seminal vesicle, coagulating gland in males, the oviduct in females, and in intestines. Expression is epithelial-specific.

Its subcellular location is the nucleus. Its function is as follows. May function as an androgen-independent transactivator of the prostate-specific antigen (PSA) promoter. Binds to 5'-GGAT-3' DNA sequences. May play a role in the regulation of the prostate gland and/or prostate cancer development. Acts as a transcriptional activator for SERPINB5 promoter. The sequence is that of SAM pointed domain-containing Ets transcription factor (Spdef) from Mus musculus (Mouse).